The sequence spans 208 residues: MARGQLYIISAPSGAGKTSLVSALLKEDKLAQVSISHTTRQVRPGEQDGVNYFFISREEFLAQAQAGDFLEHAEVFGNFYGTSQAWVESTLAKGVDVILEIDWQGAQQVRKLRPEAKSIFILPPSLEALQQRLESRGQDSAEVIQRRLQEAANEISHYPEYDYLVFNDDFDHALEELKSVFRAERLRLSVQQVRFEAELRGMLSSQSS.

Positions 4–182 constitute a Guanylate kinase-like domain; it reads GQLYIISAPS…ALEELKSVFR (179 aa). 11–18 serves as a coordination point for ATP; the sequence is APSGAGKT.

The protein belongs to the guanylate kinase family.

Its subcellular location is the cytoplasm. It catalyses the reaction GMP + ATP = GDP + ADP. Its function is as follows. Essential for recycling GMP and indirectly, cGMP. The chain is Guanylate kinase from Hahella chejuensis (strain KCTC 2396).